The primary structure comprises 102 residues: Small ribosomal subunit protein uS10 (102 aa).

The protein belongs to the universal ribosomal protein uS10 family. Part of the 30S ribosomal subunit.

Its function is as follows. Involved in the binding of tRNA to the ribosomes. The polypeptide is Small ribosomal subunit protein uS10 (Brevibacillus brevis (strain 47 / JCM 6285 / NBRC 100599)).